Consider the following 230-residue polypeptide: Large ribosomal subunit protein uL1 (230 aa).

Belongs to the universal ribosomal protein uL1 family. In terms of assembly, part of the 50S ribosomal subunit.

In terms of biological role, binds directly to 23S rRNA. The L1 stalk is quite mobile in the ribosome, and is involved in E site tRNA release. Its function is as follows. Protein L1 is also a translational repressor protein, it controls the translation of the L11 operon by binding to its mRNA. The chain is Large ribosomal subunit protein uL1 from Methylobacillus flagellatus (strain ATCC 51484 / DSM 6875 / VKM B-1610 / KT).